The chain runs to 548 residues: Natural resistance-associated macrophage protein 1 (548 aa).

A compositionally biased stretch (polar residues) spans methionine 1–glycine 11. Positions methionine 1–glutamate 38 are disordered. Residues methionine 1–leucine 55 are Cytoplasmic-facing. Residues tryptophan 56–glycine 73 form a helical membrane-spanning segment. The Extracellular portion of the chain corresponds to asparagine 74 to glycine 82. The helical transmembrane segment at alanine 83–leucine 102 threads the bilayer. At cysteine 103–glutamate 139 the chain is on the cytoplasmic side. A helical transmembrane segment spans residues leucine 140–leucine 160. Topologically, residues serine 161–arginine 164 are extracellular. Residues isoleucine 165–leucine 184 form a helical membrane-spanning segment. Residues aspartate 185 to glutamate 193 are Cytoplasmic-facing. The chain crosses the membrane as a helical span at residues alanine 194–alanine 214. Residues glutamine 215–glutamate 237 lie on the Extracellular side of the membrane. Residues leucine 238 to leucine 256 form a helical membrane-spanning segment. Residues histidine 257–glutamate 284 are Cytoplasmic-facing. Residues alanine 285–glycine 304 form a helical membrane-spanning segment. Over glutamine 305–glycine 346 the chain is Extracellular. Asparagine 335 is a glycosylation site (N-linked (GlcNAc...) asparagine). Residues valine 347–leucine 366 traverse the membrane as a helical segment. The Cytoplasmic segment spans residues alanine 367–arginine 397. The chain crosses the membrane as a helical span at residues valine 398–phenylalanine 415. The Extracellular segment spans residues arginine 416–aspartate 426. Residues leucine 427–threonine 447 form a helical membrane-spanning segment. Residues serine 448 to lysine 463 are Cytoplasmic-facing. Residues valine 464–valine 485 form a helical membrane-spanning segment. The Extracellular segment spans residues proline 486–tyrosine 493. Residues phenylalanine 494–tryptophan 513 form a helical membrane-spanning segment. Topologically, residues threonine 514–glycine 548 are cytoplasmic.

This sequence belongs to the NRAMP family.

The protein resides in the late endosome membrane. It localises to the lysosome membrane. The catalysed reaction is Zn(2+)(in) + H(+)(out) = Zn(2+)(out) + H(+)(in). It carries out the reaction Fe(2+)(in) + H(+)(out) = Fe(2+)(out) + H(+)(in). The enzyme catalyses Mn(2+)(in) + H(+)(out) = Mn(2+)(out) + H(+)(in). Its function is as follows. Macrophage-specific antiporter that fluxes metal ions in either direction against a proton gradient. Localized to late endosomal lysosomal membranes, delivers bivalent cations from the cytosol into these acidic compartments where they may directly affect antimicrobial activity. Involved in iron metabolism and host natural resistance to infection with intracellular parasites. Pathogen resistance involves sequestration of Fe(2+) and Mn(2+), cofactors of both prokaryotic and eukaryotic catalases and superoxide dismutases, not only to protect the macrophage against its own generation of reactive oxygen species, but to deny the cations to the pathogen for synthesis of its protective enzymes. In Bubalus bubalis (Domestic water buffalo), this protein is Natural resistance-associated macrophage protein 1 (SLC11A1).